Here is a 473-residue protein sequence, read N- to C-terminus: Glutamate--tRNA ligase 2 (473 aa).

A 'HIGH' region motif is present at residues 11-21 (PSPTGYLHIGG). Basic and acidic residues predominate over residues 113-133 (KARAEGRPPRYDGRWRDRDPS). The disordered stretch occupies residues 113-136 (KARAEGRPPRYDGRWRDRDPSEAP). Positions 240 to 244 (KLSKR) match the 'KMSKS' region motif. Residue K243 participates in ATP binding.

The protein belongs to the class-I aminoacyl-tRNA synthetase family. Glutamate--tRNA ligase type 1 subfamily. In terms of assembly, monomer.

The protein localises to the cytoplasm. The catalysed reaction is tRNA(Glu) + L-glutamate + ATP = L-glutamyl-tRNA(Glu) + AMP + diphosphate. Functionally, catalyzes the attachment of glutamate to tRNA(Glu) in a two-step reaction: glutamate is first activated by ATP to form Glu-AMP and then transferred to the acceptor end of tRNA(Glu). This Brucella abortus (strain S19) protein is Glutamate--tRNA ligase 2.